The sequence spans 402 residues: Beta sliding clamp (402 aa).

This sequence belongs to the beta sliding clamp family. Forms a ring-shaped head-to-tail homodimer around DNA which binds and tethers DNA polymerases and other proteins to the DNA. The DNA replisome complex has a single clamp-loading complex (3 tau and 1 each of delta, delta', psi and chi subunits) which binds 3 Pol III cores (1 core on the leading strand and 2 on the lagging strand) each with a beta sliding clamp dimer. Additional proteins in the replisome are other copies of gamma, psi and chi, Ssb, DNA helicase and RNA primase.

The protein localises to the cytoplasm. Its function is as follows. Confers DNA tethering and processivity to DNA polymerases and other proteins. Acts as a clamp, forming a ring around DNA (a reaction catalyzed by the clamp-loading complex) which diffuses in an ATP-independent manner freely and bidirectionally along dsDNA. Initially characterized for its ability to contact the catalytic subunit of DNA polymerase III (Pol III), a complex, multichain enzyme responsible for most of the replicative synthesis in bacteria; Pol III exhibits 3'-5' exonuclease proofreading activity. The beta chain is required for initiation of replication as well as for processivity of DNA replication. This chain is Beta sliding clamp (dnaN), found in Mycobacterium bovis (strain ATCC BAA-935 / AF2122/97).